Reading from the N-terminus, the 429-residue chain is 26S proteasome regulatory subunit 6A homolog (429 aa).

Residues 1-21 (MSSPPPAAAAAMAVDDADDDQ) form a disordered region. 217–224 (GPPGTGKT) contributes to the ATP binding site.

It belongs to the AAA ATPase family.

The protein localises to the cytoplasm. It localises to the nucleus. The 26S proteasome is involved in the ATP-dependent degradation of ubiquitinated proteins. The regulatory (or ATPase) complex confers ATP dependency and substrate specificity to the 26S complex. The chain is 26S proteasome regulatory subunit 6A homolog (TBP1) from Oryza sativa subsp. japonica (Rice).